Reading from the N-terminus, the 95-residue chain is Cliotide T1 (95 aa).

Positions 1–30 (GIPCGESCVFIPCITGAIGCSCKSKVCYRN) form a cross-link, cyclopeptide (Gly-Asn). Intrachain disulfides connect cysteine 4-cysteine 20, cysteine 8-cysteine 22, and cysteine 13-cysteine 27. Residues 31–95 (HVIAAEAKTM…KDHLKMSITN (65 aa)) constitute a propeptide, removed in mature form.

In terms of processing, contains 3 disulfide bonds. Post-translationally, this is a cyclic peptide. Expressed in flower, stem, shoot, root, leaf, seed, pod and nodule (at protein level).

Its function is as follows. Probably participates in a plant defense mechanism. Active against Gram-negative bacteria E.coli ATCC 700926 (MIC=1.1 uM), K.pneumoniae ATTC 13883 (MIC=2.7 uM) and P.aeruginosa ATCC 39018 (MIC=4.7 uM). Has hemolytic and cytotoxic activity. This chain is Cliotide T1, found in Clitoria ternatea (Butterfly pea).